Consider the following 79-residue polypeptide: Acyl carrier protein (79 aa).

In terms of domain architecture, Carrier spans 2–77 (SDVLERVRKI…DAVKFIQERL (76 aa)). Serine 37 is subject to O-(pantetheine 4'-phosphoryl)serine.

Belongs to the acyl carrier protein (ACP) family. Post-translationally, 4'-phosphopantetheine is transferred from CoA to a specific serine of apo-ACP by AcpS. This modification is essential for activity because fatty acids are bound in thioester linkage to the sulfhydryl of the prosthetic group.

The protein localises to the cytoplasm. It functions in the pathway lipid metabolism; fatty acid biosynthesis. Functionally, carrier of the growing fatty acid chain in fatty acid biosynthesis. In Phenylobacterium zucineum (strain HLK1), this protein is Acyl carrier protein.